The following is a 387-amino-acid chain: Ubiquitin-conjugating enzyme E2 25 (387 aa).

The interval 117 to 164 (APPVRDDIDEGRGSDISDTTSEPIDDDMAGDGEVDDDDEEEEDDEDAD) is disordered. A compositionally biased stretch (basic and acidic residues) spans 120 to 131 (VRDDIDEGRGSD). The span at 139–164 (PIDDDMAGDGEVDDDDEEEEDDEDAD) shows a compositional bias: acidic residues. A UBC core domain is found at 214–380 (TATDRLMKEI…QQIHAKSGWY (167 aa)). The Glycyl thioester intermediate role is filled by cysteine 315.

Belongs to the ubiquitin-conjugating enzyme family. In the embryo, expressed in precursor neuron and muscle cells and in other cells such as hypodermal cells. After hatching of L1 larvae and in all subsequent stages, strongest expression in pharyngeal muscle and anal muscle cells. In L4 larvae and adolescent hermaphrodites, also expressed in the vulval muscles. Expression also detected in all four nerve cords and in neurons with weaker levels in all body wall muscles.

It localises to the cytoplasm. The protein localises to the nucleus. The catalysed reaction is S-ubiquitinyl-[E1 ubiquitin-activating enzyme]-L-cysteine + [E2 ubiquitin-conjugating enzyme]-L-cysteine = [E1 ubiquitin-activating enzyme]-L-cysteine + S-ubiquitinyl-[E2 ubiquitin-conjugating enzyme]-L-cysteine.. Its pathway is protein modification; protein ubiquitination. Its function is as follows. Catalyzes the covalent attachment of ubiquitin to other proteins (Potential). Required for the maintenance of neuromuscular function. The polypeptide is Ubiquitin-conjugating enzyme E2 25 (Caenorhabditis elegans).